A 222-amino-acid chain; its full sequence is Putative auxin response factor 23 (222 aa).

Residues 126 to 222 (FTKVLTASDT…ETGELRVGIR (97 aa)) constitute a DNA-binding region (TF-B3).

The protein belongs to the ARF family. In terms of assembly, homo and heterodimers.

Its subcellular location is the nucleus. Its function is as follows. Auxin response factors (ARFs) are transcriptional factors that binds specifically to the DNA sequence 5'-TGTCTC-3' found in the auxin-responsive promoter elements (AuxREs). Could act as transcriptional activator or repressor. Formation of heterodimers with Aux/IAA proteins may alter their ability to modulate early auxin response genes expression. This chain is Putative auxin response factor 23 (ARF23), found in Arabidopsis thaliana (Mouse-ear cress).